The sequence spans 317 residues: Acetyl-coenzyme A carboxylase carboxyl transferase subunit alpha (317 aa).

Residues 39 to 293 enclose the CoA carboxyltransferase C-terminal domain; it reads KLEAKAQKAL…KEAVVEALGA (255 aa).

Belongs to the AccA family. As to quaternary structure, acetyl-CoA carboxylase is a heterohexamer composed of biotin carboxyl carrier protein (AccB), biotin carboxylase (AccC) and two subunits each of ACCase subunit alpha (AccA) and ACCase subunit beta (AccD).

The protein resides in the cytoplasm. It catalyses the reaction N(6)-carboxybiotinyl-L-lysyl-[protein] + acetyl-CoA = N(6)-biotinyl-L-lysyl-[protein] + malonyl-CoA. It participates in lipid metabolism; malonyl-CoA biosynthesis; malonyl-CoA from acetyl-CoA: step 1/1. Functionally, component of the acetyl coenzyme A carboxylase (ACC) complex. First, biotin carboxylase catalyzes the carboxylation of biotin on its carrier protein (BCCP) and then the CO(2) group is transferred by the carboxyltransferase to acetyl-CoA to form malonyl-CoA. The polypeptide is Acetyl-coenzyme A carboxylase carboxyl transferase subunit alpha (Beijerinckia indica subsp. indica (strain ATCC 9039 / DSM 1715 / NCIMB 8712)).